The following is a 316-amino-acid chain: MANLKEIRDRIVSVKNTRKITEAMRLVAAAKVRRAQEQVLRSRPFADRLARVLQNIQSRMQFETADAPLLKSRDVRTITLLAVTGDRGLCGGYNTNIIKRTEQRYNELKRQGFTPDLVLIGRKAIGYFQNRSSQYKIRAFFQDLEQVPTSKDAESVTSEILAEFLSKSTDRIEVIYTKFISLVSCNPVVQTLLPLDPQGIAEEDDEMFRLTTKNSRLVVEKDAAPSNEQPKLPSDVVFEQSPDQLLNALLPLYLQNQLLRALQESAASELASRMTAMNNASDNAKELAKTLNLTYNKARQAAITQEILEVVGGSSS.

Belongs to the ATPase gamma chain family. F-type ATPases have 2 components, CF(1) - the catalytic core - and CF(0) - the membrane proton channel. CF(1) has five subunits: alpha(3), beta(3), gamma(1), delta(1), epsilon(1). CF(0) has three main subunits: a, b and c.

It is found in the cellular thylakoid membrane. Functionally, produces ATP from ADP in the presence of a proton gradient across the membrane. The gamma chain is believed to be important in regulating ATPase activity and the flow of protons through the CF(0) complex. This chain is ATP synthase gamma chain, found in Prochlorococcus marinus (strain MIT 9211).